The chain runs to 150 residues: Transcription antitermination protein NusB (150 aa).

This sequence belongs to the NusB family.

Its function is as follows. Involved in transcription antitermination. Required for transcription of ribosomal RNA (rRNA) genes. Binds specifically to the boxA antiterminator sequence of the ribosomal RNA (rrn) operons. The sequence is that of Transcription antitermination protein NusB from Streptococcus pyogenes serotype M1.